The sequence spans 183 residues: Ribosome rescue factor SmrB (183 aa).

The 76-residue stretch at 98–173 (LDLHGLTQLQ…GDAALLVLIE (76 aa)) folds into the Smr domain.

Belongs to the SmrB family. In terms of assembly, associates with collided ribosomes, but not with correctly translating polysomes.

Functionally, acts as a ribosome collision sensor. Detects stalled/collided disomes (pairs of ribosomes where the leading ribosome is stalled and a second ribosome has collided with it) and endonucleolytically cleaves mRNA at the 5' boundary of the stalled ribosome. Stalled/collided disomes form a new interface (primarily via the 30S subunits) that binds SmrB. Cleaved mRNA becomes available for tmRNA ligation, leading to ribosomal subunit dissociation and rescue of stalled ribosomes. This is Ribosome rescue factor SmrB from Shigella dysenteriae serotype 1 (strain Sd197).